A 495-amino-acid polypeptide reads, in one-letter code: Aspartyl/glutamyl-tRNA(Asn/Gln) amidotransferase subunit B (495 aa).

The protein belongs to the GatB/GatE family. GatB subfamily. In terms of assembly, heterotrimer of A, B and C subunits.

The enzyme catalyses L-glutamyl-tRNA(Gln) + L-glutamine + ATP + H2O = L-glutaminyl-tRNA(Gln) + L-glutamate + ADP + phosphate + H(+). It catalyses the reaction L-aspartyl-tRNA(Asn) + L-glutamine + ATP + H2O = L-asparaginyl-tRNA(Asn) + L-glutamate + ADP + phosphate + 2 H(+). Functionally, allows the formation of correctly charged Asn-tRNA(Asn) or Gln-tRNA(Gln) through the transamidation of misacylated Asp-tRNA(Asn) or Glu-tRNA(Gln) in organisms which lack either or both of asparaginyl-tRNA or glutaminyl-tRNA synthetases. The reaction takes place in the presence of glutamine and ATP through an activated phospho-Asp-tRNA(Asn) or phospho-Glu-tRNA(Gln). The sequence is that of Aspartyl/glutamyl-tRNA(Asn/Gln) amidotransferase subunit B from Methylocella silvestris (strain DSM 15510 / CIP 108128 / LMG 27833 / NCIMB 13906 / BL2).